The following is a 184-amino-acid chain: Ribonuclease HII (184 aa).

In terms of domain architecture, RNase H type-2 spans 2 to 184; sequence AKICGIDEAG…KPKLAQSSLF (183 aa). The a divalent metal cation site is built by Asp-8, Glu-9, and Asp-95.

This sequence belongs to the RNase HII family. The cofactor is Mn(2+). Mg(2+) is required as a cofactor.

The protein localises to the cytoplasm. It catalyses the reaction Endonucleolytic cleavage to 5'-phosphomonoester.. Functionally, endonuclease that specifically degrades the RNA of RNA-DNA hybrids. In Campylobacter concisus (strain 13826), this protein is Ribonuclease HII.